The primary structure comprises 220 residues: Large ribosomal subunit protein uL3 (220 aa).

The segment at 137–159 is disordered; sequence GASHGAHKNHRKPGSIGGASTPS.

Belongs to the universal ribosomal protein uL3 family. In terms of assembly, part of the 50S ribosomal subunit. Forms a cluster with proteins L14 and L19.

One of the primary rRNA binding proteins, it binds directly near the 3'-end of the 23S rRNA, where it nucleates assembly of the 50S subunit. This chain is Large ribosomal subunit protein uL3, found in Renibacterium salmoninarum (strain ATCC 33209 / DSM 20767 / JCM 11484 / NBRC 15589 / NCIMB 2235).